A 535-amino-acid chain; its full sequence is Isoleucine N-monooxygenase 1 (535 aa).

At Met1–Leu8 the chain is on the cytoplasmic side. Residues Ser9–Phe29 form a helical; Signal-anchor for type II membrane protein membrane-spanning segment. Over Lys30–Ile535 the chain is Lumenal. 3 N-linked (GlcNAc...) asparagine glycosylation sites follow: Asn38, Asn232, and Asn404. Heme is bound at residue Cys470.

The protein belongs to the cytochrome P450 family. The cofactor is heme. As to expression, exclusively expressed in aerial parts. Highest expression in the apical leaves. Also detected in the second leaf from the top and in the stem. Not expressed in older leaves or roots.

It is found in the microsome membrane. The enzyme catalyses L-isoleucine + 2 reduced [NADPH--hemoprotein reductase] + 2 O2 = (1E,2S)-2-methylbutanal oxime + 2 oxidized [NADPH--hemoprotein reductase] + CO2 + 3 H2O + 2 H(+). The catalysed reaction is L-isoleucine + reduced [NADPH--hemoprotein reductase] + O2 = N-hydroxy-L-isoleucine + oxidized [NADPH--hemoprotein reductase] + H2O + 2 H(+). It carries out the reaction N-hydroxy-L-isoleucine + reduced [NADPH--hemoprotein reductase] + O2 = N,N-dihydroxy-L-isoleucine + oxidized [NADPH--hemoprotein reductase] + H2O + H(+). It catalyses the reaction L-valine + 2 reduced [NADPH--hemoprotein reductase] + 2 O2 = (E)-2-methylpropanal oxime + 2 oxidized [NADPH--hemoprotein reductase] + CO2 + 3 H2O + 2 H(+). The enzyme catalyses L-valine + reduced [NADPH--hemoprotein reductase] + O2 = N-hydroxy-L-valine + oxidized [NADPH--hemoprotein reductase] + H2O + 2 H(+). The catalysed reaction is N-hydroxy-L-valine + reduced [NADPH--hemoprotein reductase] + O2 = N,N-dihydroxy-L-valine + oxidized [NADPH--hemoprotein reductase] + H2O + H(+). It functions in the pathway secondary metabolite biosynthesis. Its function is as follows. Involved in the biosynthesis of the cyanogenic glucosides linamarin and lotaustralin and of the nitirle glucosides rhodiocyanoside A and D. Can use L-isoleucine &gt; L-valine as substrate, but not L-leucine, L-phenylalanine or L-tyrosine. Catalyzes multi-step reactions starting with two successive N-hydroxylations using L-isoleucine and, to a lower extent, L-valine as substrates leading to the formation of N,N-dihydroxy-L-valine and N,N-dihydroxy-L-isoleucine, respectively; following spontaneous reactions lead to the production of (E)-2-methylpropanal oxime and (1E,2S)-2-methylbutanal oxime, respectively. This chain is Isoleucine N-monooxygenase 1, found in Lotus japonicus (Lotus corniculatus var. japonicus).